A 308-amino-acid chain; its full sequence is uncharacterized protein (308 aa).

Residues Y191–V211 traverse the membrane as a helical segment.

The protein localises to the host membrane. This is an uncharacterized protein from Saccharolobus islandicus (Sulfolobus islandicus).